We begin with the raw amino-acid sequence, 346 residues long: MSDRNPLIDADRRADEDNTLRPQTLDDFVGQAAARANLKVFIEAAKVRGEALDHVLFVGPPGLGKTTLAQIMAKELGVNFRSTSGPVIAKAGDLAALLTNLEERDVLFIDEIHRLSPAVEEILYPAMEDFQLDLIIGEGPAARSVKIDLAKFTLVAATTRLGLLTTPLRDRFGIPVRLNFYTVEELEYIVRRGARIMQMGISSDGAREVARRSRGTPRIAGRLLRRVRDFALVAGADIIDRRIADEALSRLEVDNRGLDQLDRRYLNIIARNFGGGPVGIETIAAGLSEPRDAIEDIIEPYLIQQGFLQRTPRGRVLTAVAWQHLGLPAPAEIIQQSQYGLFMEDE.

Residues 1–181 (MSDRNPLIDA…FGIPVRLNFY (181 aa)) form a large ATPase domain (RuvB-L) region. ATP-binding positions include Leu20, Arg21, Gly62, Lys65, Thr66, Thr67, 128-130 (EDF), Arg171, Tyr181, and Arg218. Thr66 is a binding site for Mg(2+). The segment at 182–252 (TVEELEYIVR…IADEALSRLE (71 aa)) is small ATPAse domain (RuvB-S). The interval 255-346 (NRGLDQLDRR…SQYGLFMEDE (92 aa)) is head domain (RuvB-H). Arg291, Arg310, and Arg315 together coordinate DNA.

It belongs to the RuvB family. As to quaternary structure, homohexamer. Forms an RuvA(8)-RuvB(12)-Holliday junction (HJ) complex. HJ DNA is sandwiched between 2 RuvA tetramers; dsDNA enters through RuvA and exits via RuvB. An RuvB hexamer assembles on each DNA strand where it exits the tetramer. Each RuvB hexamer is contacted by two RuvA subunits (via domain III) on 2 adjacent RuvB subunits; this complex drives branch migration. In the full resolvosome a probable DNA-RuvA(4)-RuvB(12)-RuvC(2) complex forms which resolves the HJ.

Its subcellular location is the cytoplasm. The catalysed reaction is ATP + H2O = ADP + phosphate + H(+). Its function is as follows. The RuvA-RuvB-RuvC complex processes Holliday junction (HJ) DNA during genetic recombination and DNA repair, while the RuvA-RuvB complex plays an important role in the rescue of blocked DNA replication forks via replication fork reversal (RFR). RuvA specifically binds to HJ cruciform DNA, conferring on it an open structure. The RuvB hexamer acts as an ATP-dependent pump, pulling dsDNA into and through the RuvAB complex. RuvB forms 2 homohexamers on either side of HJ DNA bound by 1 or 2 RuvA tetramers; 4 subunits per hexamer contact DNA at a time. Coordinated motions by a converter formed by DNA-disengaged RuvB subunits stimulates ATP hydrolysis and nucleotide exchange. Immobilization of the converter enables RuvB to convert the ATP-contained energy into a lever motion, pulling 2 nucleotides of DNA out of the RuvA tetramer per ATP hydrolyzed, thus driving DNA branch migration. The RuvB motors rotate together with the DNA substrate, which together with the progressing nucleotide cycle form the mechanistic basis for DNA recombination by continuous HJ branch migration. Branch migration allows RuvC to scan DNA until it finds its consensus sequence, where it cleaves and resolves cruciform DNA. This is Holliday junction branch migration complex subunit RuvB from Brucella suis (strain ATCC 23445 / NCTC 10510).